Consider the following 1578-residue polypeptide: Pentafunctional AROM polypeptide (1578 aa).

Positions 1–384 (MAEPTKIKIL…YEPKASVVPN (384 aa)) are 3-dehydroquinate synthase. Residues 44–46 (DTN), 81–84 (EVSK), 114–116 (GGV), and aspartate 119 each bind NAD(+). Position 130 (arginine 130) interacts with 7-phospho-2-dehydro-3-deoxy-D-arabino-heptonate. 139-140 (TT) serves as a coordination point for NAD(+). 7-phospho-2-dehydro-3-deoxy-D-arabino-heptonate contacts are provided by aspartate 146 and lysine 152. NAD(+) is bound at residue lysine 161. Asparagine 162 contacts 7-phospho-2-dehydro-3-deoxy-D-arabino-heptonate. NAD(+) is bound by residues 179-182 (FLET) and asparagine 190. A Zn(2+)-binding site is contributed by glutamate 194. Residues 194-197 (EVIK) and lysine 250 contribute to the 7-phospho-2-dehydro-3-deoxy-D-arabino-heptonate site. Glutamate 260 serves as the catalytic Proton acceptor; for 3-dehydroquinate synthase activity. 7-phospho-2-dehydro-3-deoxy-D-arabino-heptonate contacts are provided by residues 264-268 (RNLLN) and histidine 271. A Zn(2+)-binding site is contributed by histidine 271. The active-site Proton acceptor; for 3-dehydroquinate synthase activity is the histidine 275. Residues histidine 287 and lysine 356 each coordinate 7-phospho-2-dehydro-3-deoxy-D-arabino-heptonate. Position 287 (histidine 287) interacts with Zn(2+). The segment at 397-842 (VHPGVEPASN…WDTLRQKFSA (446 aa)) is EPSP synthase. The For EPSP synthase activity role is filled by cysteine 824. Positions 864–1055 (TASVFIIGMR…KRKKHSFFVS (192 aa)) are shikimate kinase. 871–878 (GMRGAGKT) serves as a coordination point for ATP. The 3-dehydroquinase stretch occupies residues 1056–1276 (LTLPDLRTAG…AAPGQLSATE (221 aa)). Residue histidine 1179 is the Proton acceptor; for 3-dehydroquinate dehydratase activity of the active site. Lysine 1207 functions as the Schiff-base intermediate with substrate; for 3-dehydroquinate dehydratase activity in the catalytic mechanism. The segment at 1289-1578 (QKKFAVFGTP…EDARAAVLSS (290 aa)) is shikimate dehydrogenase.

The protein in the N-terminal section; belongs to the sugar phosphate cyclases superfamily. Dehydroquinate synthase family. It in the 2nd section; belongs to the EPSP synthase family. This sequence in the 3rd section; belongs to the shikimate kinase family. In the 4th section; belongs to the type-I 3-dehydroquinase family. The protein in the C-terminal section; belongs to the shikimate dehydrogenase family. In terms of assembly, homodimer. Requires Zn(2+) as cofactor.

The protein localises to the cytoplasm. The catalysed reaction is 7-phospho-2-dehydro-3-deoxy-D-arabino-heptonate = 3-dehydroquinate + phosphate. The enzyme catalyses 3-dehydroquinate = 3-dehydroshikimate + H2O. It catalyses the reaction shikimate + NADP(+) = 3-dehydroshikimate + NADPH + H(+). It carries out the reaction shikimate + ATP = 3-phosphoshikimate + ADP + H(+). The catalysed reaction is 3-phosphoshikimate + phosphoenolpyruvate = 5-O-(1-carboxyvinyl)-3-phosphoshikimate + phosphate. It functions in the pathway metabolic intermediate biosynthesis; chorismate biosynthesis; chorismate from D-erythrose 4-phosphate and phosphoenolpyruvate: step 2/7. It participates in metabolic intermediate biosynthesis; chorismate biosynthesis; chorismate from D-erythrose 4-phosphate and phosphoenolpyruvate: step 3/7. The protein operates within metabolic intermediate biosynthesis; chorismate biosynthesis; chorismate from D-erythrose 4-phosphate and phosphoenolpyruvate: step 4/7. Its pathway is metabolic intermediate biosynthesis; chorismate biosynthesis; chorismate from D-erythrose 4-phosphate and phosphoenolpyruvate: step 5/7. It functions in the pathway metabolic intermediate biosynthesis; chorismate biosynthesis; chorismate from D-erythrose 4-phosphate and phosphoenolpyruvate: step 6/7. Functionally, the AROM polypeptide catalyzes 5 consecutive enzymatic reactions in prechorismate polyaromatic amino acid biosynthesis. The chain is Pentafunctional AROM polypeptide from Aspergillus flavus (strain ATCC 200026 / FGSC A1120 / IAM 13836 / NRRL 3357 / JCM 12722 / SRRC 167).